The chain runs to 453 residues: Regulatory protein opaque-2 (453 aa).

The tract at residues S145–R243 is disordered. Polar residues predominate over residues S146–L175. A compositionally biased stretch (acidic residues) spans P207–V216. The span at P224–R240 shows a compositional bias: basic and acidic residues. One can recognise a bZIP domain in the interval T225–L288. The segment at R228 to K251 is basic motif. A leucine-zipper region spans residues L253 to L274.

It belongs to the bZIP family. Interacts with the Dof zinc finger protein PBF. In terms of tissue distribution, seed endosperm.

It is found in the nucleus. Involved in the regulation of the endosperm-specific production of albumin b-32 and other zein proteins. It is a trans-acting transcriptional activator that binds to the consensus sequence 5'-GATGAYRTGR-3'. This chain is Regulatory protein opaque-2 (O2), found in Zea mays (Maize).